The primary structure comprises 320 residues: Lipoyl synthase (320 aa).

The interval 1-27 (MRVEIDHRNSGGGKLRHPEKQHRPDNP) is disordered. The span at 16-25 (RHPEKQHRPD) shows a compositional bias: basic and acidic residues. 7 residues coordinate [4Fe-4S] cluster: C61, C66, C72, C87, C91, C94, and S300. Positions 73-289 (WSQRHATMMI…AAMARAKGFL (217 aa)) constitute a Radical SAM core domain.

It belongs to the radical SAM superfamily. Lipoyl synthase family. The cofactor is [4Fe-4S] cluster.

Its subcellular location is the cytoplasm. The enzyme catalyses [[Fe-S] cluster scaffold protein carrying a second [4Fe-4S](2+) cluster] + N(6)-octanoyl-L-lysyl-[protein] + 2 oxidized [2Fe-2S]-[ferredoxin] + 2 S-adenosyl-L-methionine + 4 H(+) = [[Fe-S] cluster scaffold protein] + N(6)-[(R)-dihydrolipoyl]-L-lysyl-[protein] + 4 Fe(3+) + 2 hydrogen sulfide + 2 5'-deoxyadenosine + 2 L-methionine + 2 reduced [2Fe-2S]-[ferredoxin]. Its pathway is protein modification; protein lipoylation via endogenous pathway; protein N(6)-(lipoyl)lysine from octanoyl-[acyl-carrier-protein]: step 2/2. Functionally, catalyzes the radical-mediated insertion of two sulfur atoms into the C-6 and C-8 positions of the octanoyl moiety bound to the lipoyl domains of lipoate-dependent enzymes, thereby converting the octanoylated domains into lipoylated derivatives. The protein is Lipoyl synthase of Acidiphilium cryptum (strain JF-5).